A 381-amino-acid polypeptide reads, in one-letter code: Class E basic helix-loop-helix protein 22 (381 aa).

Disordered stretches follow at residues 30 to 94 (RLEA…GGGG), 135 to 154 (RGSV…DSDG), and 188 to 242 (HLHG…EQKA). Over residues 82 to 94 (GGGGGSAGSGGGG) the composition is skewed to gly residues. A compositionally biased stretch (gly residues) spans 198-225 (GGLGGGGGGGSSSGSSGGGGGSGSGSGG). A bHLH domain is found at 242–296 (ALRLNINARERRRMHDLNDALDELRAVIPYAHSPSVRKLSKIATLLLAKNYILMQ).

Interacts with PRDM8. In terms of tissue distribution, brain-specific, with the highest expression in the cerebellum.

The protein localises to the nucleus. Functionally, inhibits DNA binding of TCF3/E47 homodimers and TCF3 (E47)/NEUROD1 heterodimers and acts as a strong repressor of Neurod1 and Myod-responsive genes, probably by heterodimerization with class a basic helix-loop-helix factors. Despite the presence of an intact basic domain, does not bind to DNA. In the brain, may function as an area-specific transcription factor that regulates the postmitotic acquisition of area identities and elucidate the genetic hierarchy between progenitors and postmitotic neurons driving neocortical arealization. May be required for the survival of a specific population of inhibitory neurons in the superficial laminae of the spinal cord dorsal horn that may regulate pruritis. Seems to play a crucial role in the retinogenesis, in the specification of amacrine and bipolar subtypes. Forms with PRDM8 a transcriptional repressor complex controlling genes involved in neural development and neuronal differentiation. The polypeptide is Class E basic helix-loop-helix protein 22 (BHLHE22) (Homo sapiens (Human)).